A 92-amino-acid polypeptide reads, in one-letter code: Small ribosomal subunit protein uS19 (92 aa).

It belongs to the universal ribosomal protein uS19 family.

Functionally, protein S19 forms a complex with S13 that binds strongly to the 16S ribosomal RNA. This is Small ribosomal subunit protein uS19 from Sodalis glossinidius (strain morsitans).